Reading from the N-terminus, the 99-residue chain is Progonadoliberin-1 (99 aa).

Positions 1 to 26 (MAAQTFALRLLLVGTLLGTLLGQGCC) are cleaved as a signal peptide. The residue at position 27 (Q27) is a Pyrrolidone carboxylic acid. Position 36 is a glycine amide (G36).

The protein belongs to the GnRH family.

It localises to the secreted. Its function is as follows. Stimulates the secretion of gonadotropins. In Dicentrarchus labrax (European seabass), this protein is Progonadoliberin-1 (gnrh1).